Here is a 128-residue protein sequence, read N- to C-terminus: Large ribosomal subunit protein uL22 (128 aa).

The protein belongs to the universal ribosomal protein uL22 family. Part of the 50S ribosomal subunit.

Its function is as follows. This protein binds specifically to 23S rRNA; its binding is stimulated by other ribosomal proteins, e.g. L4, L17, and L20. It is important during the early stages of 50S assembly. It makes multiple contacts with different domains of the 23S rRNA in the assembled 50S subunit and ribosome. In terms of biological role, the globular domain of the protein is located near the polypeptide exit tunnel on the outside of the subunit, while an extended beta-hairpin is found that lines the wall of the exit tunnel in the center of the 70S ribosome. This is Large ribosomal subunit protein uL22 from Rhodopseudomonas palustris (strain BisB18).